Consider the following 409-residue polypeptide: Elongation factor Tu (409 aa).

Residues 10-214 (KPHVNIGTIG…AVDAYIPTPE (205 aa)) form the tr-type G domain. A G1 region spans residues 19-26 (GHVDHGKT). 19–26 (GHVDHGKT) lines the GTP pocket. Residue Thr26 participates in Mg(2+) binding. A G2 region spans residues 60-64 (GITIN). The segment at 81–84 (DCPG) is G3. GTP-binding positions include 81 to 85 (DCPGH) and 136 to 139 (NKKD). Residues 136–139 (NKKD) form a G4 region. The G5 stretch occupies residues 174 to 176 (SAL).

Belongs to the TRAFAC class translation factor GTPase superfamily. Classic translation factor GTPase family. EF-Tu/EF-1A subfamily. As to quaternary structure, monomer.

The protein resides in the cytoplasm. The catalysed reaction is GTP + H2O = GDP + phosphate + H(+). Its function is as follows. GTP hydrolase that promotes the GTP-dependent binding of aminoacyl-tRNA to the A-site of ribosomes during protein biosynthesis. This is Elongation factor Tu from Gloeobacter violaceus (strain ATCC 29082 / PCC 7421).